Here is a 315-residue protein sequence, read N- to C-terminus: Olfactory receptor 51L1 (315 aa).

Residues 1-27 (MGDWNNSDAVEPIFILRGFPGLEYVHS) lie on the Extracellular side of the membrane. N-linked (GlcNAc...) asparagine glycosylation occurs at Asn5. A helical transmembrane segment spans residues 28 to 48 (WLSILFCLAYLVAFMGNVTIL). At 49–56 (SVIWIESS) the chain is on the cytoplasmic side. Residues 57 to 77 (LHQPMYYFISILAVNDLGMSL) traverse the membrane as a helical segment. The Extracellular portion of the chain corresponds to 78–101 (STLPTMLAVLWLDAPEIQASACYA). Cys99 and Cys191 are disulfide-bonded. Residues 102–122 (QLFFIHTFTFLESSVLLAMAF) traverse the membrane as a helical segment. Over 123–141 (DRFVAICHPLHYPTILTNS) the chain is Cytoplasmic. The helical transmembrane segment at 142-162 (VIGKIGLACLLRSLGVVLPTP) threads the bilayer. Topologically, residues 163 to 198 (LLLRHYHYCHGNALSHAFCLHQDVLRLSCTDARTNS) are extracellular. Residues 199–219 (IYGLCVVIATLGVDSIFILLS) traverse the membrane as a helical segment. The Cytoplasmic segment spans residues 220–239 (YVLILNTVLDIASREEQLKA). A helical membrane pass occupies residues 240-260 (LNTCVSHICVVLIFFVPVIGV). At 261 to 275 (SMVHRFGKHLSPIVH) the chain is on the extracellular side. The helical transmembrane segment at 276–296 (ILMADIYLLLPPVLNPIVYSV) threads the bilayer. The Cytoplasmic portion of the chain corresponds to 297–315 (RTKQIRLGILHKFVLRRRF).

Belongs to the G-protein coupled receptor 1 family.

Its subcellular location is the cell membrane. Odorant receptor. The protein is Olfactory receptor 51L1 (OR51L1) of Homo sapiens (Human).